A 498-amino-acid polypeptide reads, in one-letter code: Protein spinster homolog 3 (498 aa).

12 helical membrane-spanning segments follow: residues 49 to 71, 87 to 107, 114 to 134, 148 to 168, 175 to 195, 207 to 227, 260 to 280, 309 to 329, 343 to 363, 373 to 393, 407 to 427, and 451 to 471; these read IAVAVLCYINLLNYMDRYTIAGV, GLLQTVFICSFMFLAPVFGYL, KLIMIVGLVMWIVTTLGSSFV, LVGTGEASYSTIAPTIIGDLF, LMISFFYIFIPVGSGLGYIIG, WALRVSPALGGLGLLLLVFLI, FVWSSLGVTAMAFVTGALAFW, YIFGAITVVTGVVGVFLGTCI, LICAVGMLSSSPCFFIAIVLA, FIAIGETLLSLNWAILADILL, LQIMVCHLLGDAGSPYLIGAI, and LLCPFIGVLGGLFFLMTSLYI.

It belongs to the major facilitator superfamily. Spinster (TC 2.A.1.49) family.

It is found in the membrane. In terms of biological role, sphingolipid transporter. The polypeptide is Protein spinster homolog 3 (spns3) (Danio rerio (Zebrafish)).